The sequence spans 229 residues: ATP synthase subunit a (229 aa).

6 consecutive transmembrane segments (helical) span residues 16 to 36 (YAHV…GAAA), 81 to 101 (YIPF…LGMI), 110 to 130 (NMNT…FQGV), 142 to 162 (FMGP…VSHI), 175 to 195 (VMMG…IGVP), and 196 to 216 (IPFY…FTLL).

It belongs to the ATPase A chain family. In terms of assembly, F-type ATPases have 2 components, CF(1) - the catalytic core - and CF(0) - the membrane proton channel. CF(1) has five subunits: alpha(3), beta(3), gamma(1), delta(1), epsilon(1). CF(0) has three main subunits: a(1), b(2) and c(9-12). The alpha and beta chains form an alternating ring which encloses part of the gamma chain. CF(1) is attached to CF(0) by a central stalk formed by the gamma and epsilon chains, while a peripheral stalk is formed by the delta and b chains.

The protein localises to the cell inner membrane. Functionally, key component of the proton channel; it plays a direct role in the translocation of protons across the membrane. The polypeptide is ATP synthase subunit a (Bdellovibrio bacteriovorus (strain ATCC 15356 / DSM 50701 / NCIMB 9529 / HD100)).